Reading from the N-terminus, the 229-residue chain is NAD(P)H-hydrate epimerase (229 aa).

One can recognise a YjeF N-terminal domain in the interval 10–224 (SREVDQIAIE…DIGIPPALLD (215 aa)). A (6S)-NADPHX-binding site is contributed by 57-61 (NNGGD). K(+)-binding residues include asparagine 58 and aspartate 129. Residues 133 to 139 (GTGIRGQ) and aspartate 167 contribute to the (6S)-NADPHX site. Serine 170 is a K(+) binding site.

It belongs to the NnrE/AIBP family. Requires K(+) as cofactor.

It carries out the reaction (6R)-NADHX = (6S)-NADHX. The catalysed reaction is (6R)-NADPHX = (6S)-NADPHX. In terms of biological role, catalyzes the epimerization of the S- and R-forms of NAD(P)HX, a damaged form of NAD(P)H that is a result of enzymatic or heat-dependent hydration. This is a prerequisite for the S-specific NAD(P)H-hydrate dehydratase to allow the repair of both epimers of NAD(P)HX. This chain is NAD(P)H-hydrate epimerase, found in Rubinisphaera brasiliensis (strain ATCC 49424 / DSM 5305 / JCM 21570 / IAM 15109 / NBRC 103401 / IFAM 1448) (Planctomyces brasiliensis).